The chain runs to 115 residues: MRYVASYLLAALGGNSNPSAKDIKKILDSVGIEADDERLNKVISELNGKNIEDVIAQGVGKLASVPAGGAVAVSAAPGSAAPAAGSAPAAAEEKKDEKKEESEESDDDMGFGLFD.

At Met-1 the chain carries N-acetylmethionine. Ser-19 is modified (phosphoserine). N6-acetyllysine; alternate is present on Lys-21. Lys-21 is subject to N6-succinyllysine; alternate. The segment covering 76 to 90 has biased composition (low complexity); the sequence is APGSAAPAAGSAPAA. A disordered region spans residues 76-115; the sequence is APGSAAPAAGSAPAAAEEKKDEKKEESEESDDDMGFGLFD. Residues Ser-79 and Ser-86 each carry the phosphoserine modification. A compositionally biased stretch (basic and acidic residues) spans 91-101; the sequence is AEEKKDEKKEE. A phosphoserine mark is found at Ser-102 and Ser-105.

Belongs to the eukaryotic ribosomal protein P1/P2 family. In terms of assembly, heterodimer with RPLP1 at the lateral ribosomal stalk of the large ribosomal subunit.

Plays an important role in the elongation step of protein synthesis. The chain is Large ribosomal subunit protein P2 (Rplp2) from Rattus norvegicus (Rat).